The chain runs to 55 residues: Large ribosomal subunit protein bL33 (55 aa).

The span at 1–11 shows a compositional bias: basic and acidic residues; the sequence is MAKGARDKIKL. The disordered stretch occupies residues 1–24; it reads MAKGARDKIKLESTAGTGHFYTTT. Residues 14-24 are compositionally biased toward polar residues; that stretch reads TAGTGHFYTTT.

This sequence belongs to the bacterial ribosomal protein bL33 family.

This Burkholderia multivorans (strain ATCC 17616 / 249) protein is Large ribosomal subunit protein bL33.